Reading from the N-terminus, the 293-residue chain is Small ribosomal subunit protein uS2 (293 aa).

Residues 219 to 293 (IASAKPDEPY…WATPKTEDWA (75 aa)) form a disordered region.

This sequence belongs to the universal ribosomal protein uS2 family. As to quaternary structure, component of the small ribosomal subunit. Mature ribosomes consist of a small (40S) and a large (60S) subunit. The 40S subunit contains about 33 different proteins and 1 molecule of RNA (18S). The 60S subunit contains about 49 different proteins and 3 molecules of RNA (28S, 5.8S and 5S). Interacts with ribosomal protein S21.

It localises to the cytoplasm. Required for the assembly and/or stability of the 40S ribosomal subunit. Required for the processing of the 20S rRNA-precursor to mature 18S rRNA in a late step of the maturation of 40S ribosomal subunits. This is Small ribosomal subunit protein uS2 from Hydra viridissima (Green hydra).